A 1409-amino-acid chain; its full sequence is CRISPR-associated endonuclease Cas9 (1409 aa).

Aspartate 31 serves as the catalytic For RuvC-like nuclease domain. Aspartate 31, glutamate 784, and glutamate 788 together coordinate Mg(2+). Residues 792–949 (TNQGKSNSQQ…DKAGFIQRQL (158 aa)) form the HNH Cas9-type domain. The active-site Proton acceptor for HNH nuclease domain is histidine 868. Histidine 1011 contacts Mg(2+). Residues 1121-1130 (EQNHGLDRGK) show a composition bias toward basic and acidic residues. The interval 1121–1151 (EQNHGLDRGKPKGLFNANLSSKPKPNSNENL) is disordered. Residues 1137 to 1150 (ANLSSKPKPNSNEN) are compositionally biased toward polar residues.

The protein belongs to the CRISPR-associated protein Cas9 family. Subtype II-A subfamily. As to quaternary structure, monomer. Binds crRNA and tracrRNA. Mg(2+) is required as a cofactor.

With respect to regulation, only has nuclease activity when bound to both gRNAs (crRNA plus tracrRNA). Its function is as follows. CRISPR (clustered regularly interspaced short palindromic repeat) is an adaptive immune system that provides protection against mobile genetic elements (viruses, transposable elements and conjugative plasmids). CRISPR clusters contain spacers, sequences complementary to antecedent mobile elements, and target invading nucleic acids. CRISPR clusters are transcribed and processed into CRISPR RNA (crRNA). In type II CRISPR systems correct processing of pre-crRNA requires a trans-encoded small RNA (tracrRNA), endogenous ribonuclease 3 (rnc) and Cas9. The tracrRNA serves as a guide for ribonuclease 3-aided processing of pre-crRNA. Cas9/crRNA/tracrRNA endonucleolytically cleaves linear or circular dsDNA target complementary to the spacer yielding blunt ends; Cas9 is inactive in the absence of the 2 guide RNAs (gRNA). Cas9 recognizes a 3'-G-rich protospacer adjacent motif (PAM, TGGTG in this organism) in the CRISPR repeat sequences to help distinguish self versus nonself, as targets within the bacterial CRISPR locus do not have PAMs. PAM recognition is also required for catalytic activity. When the CRISPR3/cas system consisting of cas9-cas1-cas2-csn2-CRISPR3 or just cas9-CRISPR3 is expressed in E.coli it prevents plasmids homologous to spacers 1 or 2 from transforming. The chain is CRISPR-associated endonuclease Cas9 from Streptococcus thermophilus.